Here is a 375-residue protein sequence, read N- to C-terminus: NADH-ubiquinone oxidoreductase 40 kDa subunit, mitochondrial (375 aa).

A mitochondrion-targeting transit peptide spans 1 to 26 (MAPLTAAMRSTPRIIVSNAFGFQRRA).

This sequence belongs to the complex I NDUFA9 subunit family. In terms of assembly, complex I is composed of about 40 different subunits. The cofactor is FAD.

It localises to the mitochondrion matrix. Its function is as follows. Accessory subunit of the mitochondrial membrane respiratory chain NADH dehydrogenase (Complex I), that is believed not to be involved in catalysis. Complex I functions in the transfer of electrons from NADH to the respiratory chain. The immediate electron acceptor for the enzyme is believed to be ubiquinone. The protein is NADH-ubiquinone oxidoreductase 40 kDa subunit, mitochondrial (nuo40) of Neurospora crassa (strain ATCC 24698 / 74-OR23-1A / CBS 708.71 / DSM 1257 / FGSC 987).